The chain runs to 160 residues: Transcriptional repressor NrdR (160 aa).

Residues 1 to 11 are compositionally biased toward polar residues; sequence MRCPSCSSLDT. The disordered stretch occupies residues 1–20; it reads MRCPSCSSLDTQVKDSRPTE. Residues 3-34 fold into a zinc finger; that stretch reads CPSCSSLDTQVKDSRPTEDSSVIRRRRVCLAC. Positions 49–139 constitute an ATP-cone domain; sequence LTVIKRNGRR…VYRNFREAKD (91 aa).

This sequence belongs to the NrdR family. Zn(2+) is required as a cofactor.

Negatively regulates transcription of bacterial ribonucleotide reductase nrd genes and operons by binding to NrdR-boxes. The protein is Transcriptional repressor NrdR of Rhodopseudomonas palustris (strain BisA53).